A 57-amino-acid chain; its full sequence is uncharacterized protein (57 aa).

The first 20 residues, 1-20, serve as a signal peptide directing secretion; that stretch reads MKKLALILFMGTLVSFYADA.

This is an uncharacterized protein from Escherichia coli (strain K12).